A 45-amino-acid chain; its full sequence is MHYGSKGWYVAELKKQGITHHEGRKLQSYKTYFLANLLESKKKQS.

This is an uncharacterized protein from Bacillus subtilis (strain 168).